A 257-amino-acid polypeptide reads, in one-letter code: Acetylglutamate kinase (257 aa).

Substrate-binding positions include Gly-41–Gly-42, Arg-63, and Asn-158.

The protein belongs to the acetylglutamate kinase family. ArgB subfamily.

Its subcellular location is the cytoplasm. It catalyses the reaction N-acetyl-L-glutamate + ATP = N-acetyl-L-glutamyl 5-phosphate + ADP. It functions in the pathway amino-acid biosynthesis; L-arginine biosynthesis; N(2)-acetyl-L-ornithine from L-glutamate: step 2/4. Catalyzes the ATP-dependent phosphorylation of N-acetyl-L-glutamate. This is Acetylglutamate kinase from Phocaeicola vulgatus (strain ATCC 8482 / DSM 1447 / JCM 5826 / CCUG 4940 / NBRC 14291 / NCTC 11154) (Bacteroides vulgatus).